We begin with the raw amino-acid sequence, 152 residues long: Aspartate carbamoyltransferase regulatory chain (152 aa).

Residues Cys108, Cys113, Cys137, and Cys140 each coordinate Zn(2+).

This sequence belongs to the PyrI family. In terms of assembly, contains catalytic and regulatory chains. It depends on Zn(2+) as a cofactor.

Involved in allosteric regulation of aspartate carbamoyltransferase. In Neisseria meningitidis serogroup A / serotype 4A (strain DSM 15465 / Z2491), this protein is Aspartate carbamoyltransferase regulatory chain.